The sequence spans 821 residues: MSTGNVYQELIRRYLVVVKKLYEGKYEVSRSFSYTMFSLLVGIIGKQYVTVFYGVPVWKEAKTHLICATDNSSLWVTTNCIPSLPDYDEVEIPDIKENFTGLIRENQIVYQAWHAMGSMLDTILKPCVKINPYCVKMQCQETENVSATTAKPITTPTTTSTVASSTEIYLDVDKNNTEEKVERNHVCRYNITGLCRDSKEEIVTNFRGDDVKCENNTCYMNHCNESVNTEDCQKGLLIRCILGCVPPGYVMLRYNEKLNNNKLCSNISAVQCTQHLVATVSSFFGFNGTMHKEGELIPIDDKYRGPEEFHQRKFVYKVPGKYGLKIECHRKGNRSVVSTPSATGLLFYHGLEPGKNLKKGMCTFKGRWGLALWSLAKELNKLNDSIKVNQTCKNFTSTGEENKQNTDKQKEFAKCIKTLKIDNYTTSGDRAAEMMMMTCQGEMFFCNVTRIMRAWNDPNEKKWYPYASCQIRQIVDDWMQVGRKIYLPPTSGFNNHIRCTHRVTEMYFEMQKIDSNETKMQIKFLPPSETSNQFVAYGAHYKLVKIMPIGIAPTDVKRHTLPEHHKEKRGAVILGILGLLSLAGSAMGSVSVALTVQSQSLVTGIVEQQKQLLKLIEQQSELLKLTIWGVKNLQTRLTSLENYIKDQALLSQWGCSWAQVCHTSVEWTNTSITPNWTSETWKEWETRTDYLQQNITEMLKQAYDREQRNTYELQKLGDLTSWASWFDFTWWVQYLKWGVFLVLGIIGLRILLALWNTISRFRQGYRPVFSQDCQQNLYRKRPDNGEEESNSLELGEHNSENLKEESLNRSLIEDLTSFARE.

The Extracellular segment spans residues 1-737 (MSTGNVYQEL…FTWWVQYLKW (737 aa)). Residues cysteine 67 and cysteine 80 are joined by a disulfide bond. N-linked (GlcNAc...) asparagine; by host glycosylation is found at asparagine 71, asparagine 98, asparagine 144, asparagine 175, asparagine 190, asparagine 215, asparagine 224, asparagine 266, asparagine 287, asparagine 333, asparagine 383, asparagine 389, asparagine 394, asparagine 423, asparagine 447, and asparagine 516. Intrachain disulfides connect cysteine 127-cysteine 232, cysteine 134-cysteine 223, cysteine 139-cysteine 187, and cysteine 244-cysteine 272. Positions 139 to 186 (CQETENVSATTAKPITTPTTTSTVASSTEIYLDVDKNNTEEKVERNHV) are V1. The V2 stretch occupies residues 187 to 223 (CRYNITGLCRDSKEEIVTNFRGDDVKCENNTCYMNHC). The V3 stretch occupies residues 328-361 (CHRKGNRSVVSTPSATGLLFYHGLEPGKNLKKGM). 2 cysteine pairs are disulfide-bonded: cysteine 439–cysteine 499 and cysteine 446–cysteine 469. The V4 stretch occupies residues 446 to 469 (CNVTRIMRAWNDPNEKKWYPYASC). Residues 515–526 (SNETKMQIKFLP) are V5. The interval 570 to 590 (GAVILGILGLLSLAGSAMGSV) is fusion peptide. Residues 607–627 (EQQKQLLKLIEQQSELLKLTI) are a coiled coil. 3 N-linked (GlcNAc...) asparagine; by host glycosylation sites follow: asparagine 669, asparagine 675, and asparagine 694. Positions 715 to 736 (KLGDLTSWASWFDFTWWVQYLK) are MPER; binding to GalCer. A helical transmembrane segment spans residues 738–758 (GVFLVLGIIGLRILLALWNTI). Topologically, residues 759 to 821 (SRFRQGYRPV…IEDLTSFARE (63 aa)) are cytoplasmic. A YXXV motif; contains endocytosis signal motif is present at residues 765 to 768 (YRPV). The disordered stretch occupies residues 780–805 (KRPDNGEEESNSLELGEHNSENLKEE). Residues 794–805 (LGEHNSENLKEE) show a composition bias toward basic and acidic residues.

As to quaternary structure, the mature envelope protein (Env) consists of a homotrimer of non-covalently associated gp120-gp41 heterodimers. The resulting complex protrudes from the virus surface as a spike. Interacts with host CD4 and CCR5. Gp120 also interacts with the C-type lectins CD209/DC-SIGN and CLEC4M/DC-SIGNR (collectively referred to as DC-SIGN(R)). The mature envelope protein (Env) consists of a homotrimer of non-covalently associated gp120-gp41 heterodimers. The resulting complex protrudes from the virus surface as a spike. Post-translationally, specific enzymatic cleavages in vivo yield mature proteins. Envelope glycoproteins are synthesized as an inactive precursor that is heavily N-glycosylated and processed likely by host cell furin in the Golgi to yield the mature SU and TM proteins. The cleavage site between SU and TM requires the minimal sequence [KR]-X-[KR]-R.

The protein localises to the virion membrane. It localises to the host cell membrane. The protein resides in the host endosome membrane. Its function is as follows. The surface protein gp120 (SU) attaches the virus to the host lymphoid cell by binding to the primary receptor CD4. This interaction induces a structural rearrangement creating a high affinity binding site for a chemokine coreceptor like CCR5. This peculiar 2 stage receptor-interaction strategy allows gp120 to maintain the highly conserved coreceptor-binding site in a cryptic conformation, protected from neutralizing antibodies. These changes are transmitted to the transmembrane protein gp41 and are thought to activate its fusogenic potential by unmasking its fusion peptide. Functionally, surface protein gp120 (SU) may target the virus to gut-associated lymphoid tissue (GALT) by binding host ITGA4/ITGB7 (alpha-4/beta-7 integrins), a complex that mediates T-cell migration to the GALT. Interaction between gp120 and ITGA4/ITGB7 would allow the virus to enter GALT early in the infection, infecting and killing most of GALT's resting CD4+ T-cells. This T-cell depletion is believed to be the major insult to the host immune system leading to AIDS. The surface protein gp120 is a ligand for CD209/DC-SIGN and CLEC4M/DC-SIGNR, which are respectively found on dendritic cells (DCs), and on endothelial cells of liver sinusoids and lymph node sinuses. These interactions allow capture of viral particles at mucosal surfaces by these cells and subsequent transmission to permissive cells. DCs are professional antigen presenting cells, critical for host immunity by inducing specific immune responses against a broad variety of pathogens. They act as sentinels in various tissues where they take up antigen, process it, and present it to T-cells following migration to lymphoid organs. SIV subverts the migration properties of dendritic cells to gain access to CD4+ T-cells in lymph nodes. Virus transmission to permissive T-cells occurs either in trans (without DCs infection, through viral capture and transmission), or in cis (following DCs productive infection, through the usual CD4-gp120 interaction), thereby inducing a robust infection. In trans infection, bound virions remain infectious over days and it is proposed that they are not degraded, but protected in non-lysosomal acidic organelles within the DCs close to the cell membrane thus contributing to the viral infectious potential during DCs' migration from the periphery to the lymphoid tissues. On arrival at lymphoid tissues, intact virions recycle back to DCs' cell surface allowing virus transmission to CD4+ T-cells. Virion capture also seems to lead to MHC-II-restricted viral antigen presentation, and probably to the activation of SIV-specific CD4+ cells. In terms of biological role, the transmembrane protein gp41 (TM) acts as a class I viral fusion protein. Under the current model, the protein has at least 3 conformational states: pre-fusion native state, pre-hairpin intermediate state, and post-fusion hairpin state. During fusion of viral and target intracellular membranes, the coiled coil regions (heptad repeats) assume a trimer-of-hairpins structure, positioning the fusion peptide in close proximity to the C-terminal region of the ectodomain. The formation of this structure appears to drive apposition and subsequent fusion of viral and target cell membranes. Complete fusion occurs in host cell endosomes. The virus undergoes clathrin-dependent internalization long before endosomal fusion, thus minimizing the surface exposure of conserved viral epitopes during fusion and reducing the efficacy of inhibitors targeting these epitopes. Membranes fusion leads to delivery of the nucleocapsid into the cytoplasm. Its function is as follows. The envelope glycoprotein gp160 precursor down-modulates cell surface CD4 antigen by interacting with it in the endoplasmic reticulum and blocking its transport to the cell surface. Functionally, the gp120-gp41 heterodimer allows rapid transcytosis of the virus through CD4 negative cells such as simple epithelial monolayers of the intestinal, rectal and endocervical epithelial barriers. Both gp120 and gp41 specifically recognize glycosphingolipids galactosyl-ceramide (GalCer) or 3' sulfo-galactosyl-ceramide (GalS) present in the lipid rafts structures of epithelial cells. Binding to these alternative receptors allows the rapid transcytosis of the virus through the epithelial cells. This transcytotic vesicle-mediated transport of virions from the apical side to the basolateral side of the epithelial cells does not involve infection of the cells themselves. The sequence is that of Envelope glycoprotein gp160 (env) from Cercopithecidae (Old World monkeys).